A 212-amino-acid chain; its full sequence is MEISMPPPQIYVEKTLAIIKPDIVDKEEEIQDIILRSGFTIVQRRKLRLSPEQCSNFYVEKYGKMFFPNLTAYMSSGPLVAMILARHKAISYWLELLGPNNSLVAKETHPDSLRAIYGTDDLRNALHGSNDFAAAEREIRFMFPEVIVEPIPIGQAAKDYLNLHIMPTLLEGLTELCKQKPADPLIWLADWLLKNNPNKPKLCHHPIVEEPY.

An NDK region spans residues 13–145 (EKTLAIIKPD…EREIRFMFPE (133 aa)).

Belongs to the NDK family. As to quaternary structure, component of the axonemal radial spoke complex 1 (RS1), at least composed of spoke head proteins RSPH1, RSPH3, RSPH9 and the cilia-specific component RSPH4A or sperm-specific component RSPH6A, spoke stalk proteins RSPH14, DNAJB13, DYDC1, ROPN1L and NME5, and the anchor protein IQUB. Interacts with IQUB. Specifically expressed in testis germinal cells.

Its subcellular location is the cell projection. The protein localises to the cilium. The protein resides in the cytoplasm. It is found in the cytoskeleton. It localises to the flagellum axoneme. Functionally, functions as part of axonemal radial spoke complexes that play an important part in the motility of sperm and cilia. Does not seem to have nucleoside diphosphate kinase (NDPK) activity. Confers protection from cell death by BAX and alters the cellular levels of several antioxidant enzymes including GPX5. May play a role in spermiogenesis by increasing the ability of late-stage spermatids to eliminate reactive oxygen species. Exhibits a 3'-5' exonuclease activity with a preference for single-stranded DNA, suggesting roles in DNA proofreading and repair. This Homo sapiens (Human) protein is Nucleoside diphosphate kinase homolog 5.